Here is a 251-residue protein sequence, read N- to C-terminus: Haloacid dehalogenase-like hydrolase domain-containing protein 3 (251 aa).

At Lys15 the chain carries N6-acetyllysine; alternate. Lys15 carries the N6-succinyllysine; alternate modification. Lys130 bears the N6-acetyllysine mark.

Belongs to the HAD-like hydrolase superfamily.

This Mus musculus (Mouse) protein is Haloacid dehalogenase-like hydrolase domain-containing protein 3 (Hdhd3).